A 162-amino-acid chain; its full sequence is Disulfide bond formation protein B (162 aa).

Over 1-8 (MTPLFRKA) the chain is Cytoplasmic. Residues 9 to 25 (VWLLFAVSVCAFAGSLA) traverse the membrane as a helical segment. The Periplasmic segment spans residues 26–43 (AQYVLGMEPCVLCISQRL). A disulfide bridge links Cys35 with Cys38. A helical membrane pass occupies residues 44-60 (CVLATALCAAVVLACKP). Over 61-67 (KGRVGGL) the chain is Cytoplasmic. The chain crosses the membrane as a helical span at residues 68-85 (SGAVFISIPAVTGISVAA). Over 86 to 141 (YQLWLQSLPPGAAPSCGAPWTFRLKGWPLFDWFEPVVRGFGNCAEPDYLLGVALPV) the chain is Periplasmic. Cysteines 101 and 128 form a disulfide. The chain crosses the membrane as a helical span at residues 142 to 160 (WSAAYFLAVVLTVWWAWAR). Residues 161-162 (AK) are Cytoplasmic-facing.

This sequence belongs to the DsbB family.

The protein resides in the cell inner membrane. Functionally, required for disulfide bond formation in some periplasmic proteins. Acts by oxidizing the DsbA protein. This is Disulfide bond formation protein B from Neisseria gonorrhoeae (strain ATCC 700825 / FA 1090).